The following is a 332-amino-acid chain: Nucleoid-associated protein VVA0877 (332 aa).

Belongs to the YejK family.

It is found in the cytoplasm. The protein resides in the nucleoid. The chain is Nucleoid-associated protein VVA0877 from Vibrio vulnificus (strain YJ016).